We begin with the raw amino-acid sequence, 462 residues long: Glycerol-3-phosphate dehydrogenase [NAD(+)] GPDHC1, cytosolic (462 aa).

NAD(+) contacts are provided by residues 48–53 (GAGAWG), lysine 196, and alanine 235. Lysine 196 provides a ligand contact to substrate. The active-site Proton acceptor is the lysine 285. Arginine 347 and glutamine 375 together coordinate NAD(+). 347 to 348 (RN) serves as a coordination point for substrate.

This sequence belongs to the NAD-dependent glycerol-3-phosphate dehydrogenase family. As to expression, expressed in roots, leaves, flowers and siliques.

It is found in the cytoplasm. It localises to the cytosol. The enzyme catalyses sn-glycerol 3-phosphate + NAD(+) = dihydroxyacetone phosphate + NADH + H(+). In terms of biological role, involved in cell redox homeostasis. Required for maintaining a steady state cellular NADH/NAD(+) ratio through a mitochondrial glycerol-3-phosphate redox shuttle. May function with the mitochondrial FAD-dependent glycerol-3-phosphate dehydrogenase SDP6 to shuttle reducing equivalents into the mitochondria for respiration. The chain is Glycerol-3-phosphate dehydrogenase [NAD(+)] GPDHC1, cytosolic (GPDHC1) from Arabidopsis thaliana (Mouse-ear cress).